The primary structure comprises 636 residues: Amylosucrase (636 aa).

Positions 152, 195, 262, and 292 each coordinate substrate. The active-site Nucleophile is Asp294. The Proton donor role is filled by Glu336. His400, Asp401, and Arg517 together coordinate substrate.

The protein belongs to the glycosyl hydrolase 13 family. Monomer.

Its subcellular location is the secreted. The catalysed reaction is [(1-&gt;4)-alpha-D-glucosyl](n) + sucrose = [(1-&gt;4)-alpha-D-glucosyl](n+1) + D-fructose. Its activity is regulated as follows. Amylosucrase favors hydrolysis at low sucrose concentrations, and polymerization at high sucrose concentrations. Competitively inhibited by fructose. Its function is as follows. Catalyzes the synthesis of alpha-glucan from sucrose. Catalyzes, in addition, sucrose hydrolysis, maltose and maltotriose synthesis by successive transfers of the glucosyl moiety of sucrose onto the released glucose, and finally turanose and trehalulose synthesis, these two sucrose isomers being obtained by glucosyl transfer onto fructose. The polypeptide is Amylosucrase (ams) (Neisseria polysaccharea).